Consider the following 427-residue polypeptide: MSVNNKQWYGLPLNLIWGYVAIAVFMTGDGFELAFLSHYIKALGFTPAQASFAFTLYGLAAALSAWVSGVVAEIITPRKAMLIGFVLWCVFHVLFLVFGLGRANYALILLFYGIRGLAYPLFLYSFIVAIIHNVRSDSSSSALGWFWAVYSVGIGVFGSYIPSFTIPHIGEMGTLWLALLFCATGGIIALVSMRHTETPRHMQNLTTREKFAELGRAATLLYTNRSILFSSIVRIINTLSLFGFAVIMPMMFVDELGFTTSEWLQVWAAFFFTTIFSNVFWGIVAEKMGWMKVIRWFGCIGMALSSLAFYYLPQHFGHNFAMALVPAIALGIFVAAFVPMAAVFPALEPNHKGAAISVYNLSAGLSNFLAPAIAVVLLPYFSTIGVVIAYTALYILAFFLCPLIRVEQPGFTSDQHAKPFTANAAES.

At 1–7 (MSVNNKQ) the chain is on the cytoplasmic side. The chain crosses the membrane as a helical span at residues 8-28 (WYGLPLNLIWGYVAIAVFMTG). Residues 29 to 51 (DGFELAFLSHYIKALGFTPAQAS) are Extracellular-facing. The chain crosses the membrane as a helical span at residues 52-72 (FAFTLYGLAAALSAWVSGVVA). Residues 73-79 (EIITPRK) lie on the Cytoplasmic side of the membrane. The chain crosses the membrane as a helical span at residues 80–100 (AMLIGFVLWCVFHVLFLVFGL). Residues 101-107 (GRANYAL) lie on the Extracellular side of the membrane. Residues 108 to 128 (ILLFYGIRGLAYPLFLYSFIV) form a helical membrane-spanning segment. The Cytoplasmic portion of the chain corresponds to 129–141 (AIIHNVRSDSSSS). The chain crosses the membrane as a helical span at residues 142–162 (ALGWFWAVYSVGIGVFGSYIP). The Extracellular segment spans residues 163–171 (SFTIPHIGE). A helical membrane pass occupies residues 172 to 192 (MGTLWLALLFCATGGIIALVS). At 193–238 (MRHTETPRHMQNLTTREKFAELGRAATLLYTNRSILFSSIVRIINT) the chain is on the cytoplasmic side. A helical transmembrane segment spans residues 239–259 (LSLFGFAVIMPMMFVDELGFT). Residues 260–263 (TSEW) lie on the Extracellular side of the membrane. Residues 264–284 (LQVWAAFFFTTIFSNVFWGIV) traverse the membrane as a helical segment. Residues 285–295 (AEKMGWMKVIR) lie on the Cytoplasmic side of the membrane. The helical transmembrane segment at 296–316 (WFGCIGMALSSLAFYYLPQHF) threads the bilayer. At 317–323 (GHNFAMA) the chain is on the extracellular side. Residues 324-344 (LVPAIALGIFVAAFVPMAAVF) traverse the membrane as a helical segment. The Cytoplasmic portion of the chain corresponds to 345–360 (PALEPNHKGAAISVYN). Residues 361 to 381 (LSAGLSNFLAPAIAVVLLPYF) form a helical membrane-spanning segment. At 382-383 (ST) the chain is on the extracellular side. Residues 384 to 404 (IGVVIAYTALYILAFFLCPLI) form a helical membrane-spanning segment. At 405–427 (RVEQPGFTSDQHAKPFTANAAES) the chain is on the cytoplasmic side.

It belongs to the major facilitator superfamily. Sugar transporter (TC 2.A.1.1) family. CsbX subfamily.

It is found in the cell membrane. The polypeptide is Ribitol transporter (rbtT) (Klebsiella pneumoniae).